Here is a 229-residue protein sequence, read N- to C-terminus: Peroxiredoxin 1 (229 aa).

One can recognise a Thioredoxin domain in the interval 33–192 (LGPKNKAPDF…AFRTLKAFQF (160 aa)). Cysteine 78 acts as the Cysteine sulfenic acid (-SOH) intermediate in catalysis.

It belongs to the peroxiredoxin family. AhpC/Prx1 subfamily. In terms of assembly, homodimer; disulfide-linked, upon oxidation.

The catalysed reaction is a hydroperoxide + [thioredoxin]-dithiol = an alcohol + [thioredoxin]-disulfide + H2O. In terms of biological role, thiol-specific peroxidase that catalyzes the reduction of hydrogen peroxide and organic hydroperoxides to water and alcohols, respectively. Plays a role in cell protection against oxidative stress by detoxifying peroxides and as sensor of hydrogen peroxide-mediated signaling events. The sequence is that of Peroxiredoxin 1 (TSA1) from Brugia malayi (Filarial nematode worm).